Consider the following 708-residue polypeptide: Leukotoxin translocation ATP-binding protein LktB (708 aa).

One can recognise a Peptidase C39 domain in the interval Met-1–Val-126. In terms of domain architecture, ABC transmembrane type-1 spans Phe-155–Gln-437. 5 helical membrane passes run Leu-159–Val-179, Leu-192–Leu-212, Ala-270–Tyr-290, Leu-296–Leu-316, and Val-389–Gly-409. In terms of domain architecture, ABC transporter spans Ile-469–Gln-704. Residue Gly-503 to Ser-510 coordinates ATP.

It belongs to the ABC transporter superfamily. Protein-1 exporter (TC 3.A.1.109) family. In terms of assembly, homodimer.

It localises to the cell inner membrane. It carries out the reaction ATP + H2O + proteinSide 1 = ADP + phosphate + proteinSide 2.. Functionally, part of the ABC transporter complex LktBD involved in leukotoxin export. Transmembrane domains (TMD) form a pore in the inner membrane and the ATP-binding domain (NBD) is responsible for energy generation. The protein is Leukotoxin translocation ATP-binding protein LktB (lktB) of Mannheimia haemolytica (Pasteurella haemolytica).